The chain runs to 424 residues: MAAESDVLHFQFEQQGDVVLQKMNLLRQQNLFCDVSIYINDTEFQGHKVILAACSTFMRDQFLLTQSKHVRITILQSAEVGRKLLLSCYTGALEVKRKELLKYLTAASYLQMVHIVEKCTEALSKYLEIDLSMKNNNQHVDLCQSSDRDVKNEDENSDKDCEIIEISEDSPVNIDFHVKEEESNVLQSTVESLTTEREEMRSPELSSVDMSFKDNEIRILHVESISTGGVENGKFSQPCTSSKASMYFSETQHSLINSTVESRVAEVPGNQDQGLFCENTEGSHGPVNEIQNLEDAFSLRHQCPRCPRGFLHVENYLRHLKMHKLFLCLQCGKTFTQKKNLNRHIRGHMGIRPFQCTVCLKTFTAKSTLQDHLNIHSGDRPYKCHCCDMDFKHKSALKKHLTSLHGRSSGEKLPRHDLERQNLL.

One can recognise a BTB domain in the interval 33 to 97 (CDVSIYINDT…CYTGALEVKR (65 aa)). Ser-202 is modified (phosphoserine). 4 consecutive C2H2-type zinc fingers follow at residues 301 to 323 (HQCP…LKMH), 326 to 348 (FLCL…IRGH), 354 to 376 (FQCT…LNIH), and 382 to 405 (YKCH…TSLH). A disordered region spans residues 403 to 424 (SLHGRSSGEKLPRHDLERQNLL). Residues 408–424 (SSGEKLPRHDLERQNLL) show a composition bias toward basic and acidic residues.

It is found in the nucleus. May be involved in transcriptional regulation. This Bos taurus (Bovine) protein is Zinc finger and BTB domain-containing protein 6 (ZBTB6).